A 313-amino-acid polypeptide reads, in one-letter code: Cytochrome f (313 aa).

Positions 1 to 30 (MRNWSFSKAALTVSLLALSWSPFGPAEVQA) are cleaved as a signal peptide. Positions 31, 51, 54, and 55 each coordinate heme. The chain crosses the membrane as a helical span at residues 279 to 298 (VQGLIIFFAFVLIAQVFLVL).

Belongs to the cytochrome f family. The 4 large subunits of the cytochrome b6-f complex are cytochrome b6, subunit IV (17 kDa polypeptide, petD), cytochrome f and the Rieske protein, while the 4 small subunits are PetG, PetL, PetM and PetN. The complex functions as a dimer. Requires heme as cofactor.

Its subcellular location is the plastid. The protein localises to the chloroplast thylakoid membrane. In terms of biological role, component of the cytochrome b6-f complex, which mediates electron transfer between photosystem II (PSII) and photosystem I (PSI), cyclic electron flow around PSI, and state transitions. The protein is Cytochrome f of Nephroselmis olivacea (Green alga).